A 183-amino-acid chain; its full sequence is Dual-action ribosomal maturation protein DarP (183 aa).

The protein belongs to the DarP family.

It localises to the cytoplasm. In terms of biological role, member of a network of 50S ribosomal subunit biogenesis factors which assembles along the 30S-50S interface, preventing incorrect 23S rRNA structures from forming. Promotes peptidyl transferase center (PTC) maturation. This is Dual-action ribosomal maturation protein DarP from Escherichia coli O6:H1 (strain CFT073 / ATCC 700928 / UPEC).